A 160-amino-acid polypeptide reads, in one-letter code: Cytochrome b6-f complex subunit 4 (160 aa).

The next 3 membrane-spanning stretches (helical) occupy residues 36-56 (LLYIFPVVILGSIACCGGLAV), 95-115 (LLGVVLMAAVPAGLIAVPFIE), and 131-151 (AVFLFGTFVAIWLGIGATFPI).

The protein belongs to the cytochrome b family. PetD subfamily. The 4 large subunits of the cytochrome b6-f complex are cytochrome b6, subunit IV (17 kDa polypeptide, petD), cytochrome f and the Rieske protein, while the 4 small subunits are petG, petL, petM and petN. The complex functions as a dimer.

The protein resides in the plastid. It localises to the cyanelle thylakoid membrane. Functionally, component of the cytochrome b6-f complex, which mediates electron transfer between photosystem II (PSII) and photosystem I (PSI), cyclic electron flow around PSI, and state transitions. The polypeptide is Cytochrome b6-f complex subunit 4 (Cyanophora paradoxa).